The chain runs to 686 residues: Phosphomethylpyrimidine synthase (686 aa).

Substrate is bound by residues asparagine 235, methionine 264, tyrosine 293, histidine 329, 349–351, 390–393, and glutamate 429; these read SRG and DGMR. Histidine 433 provides a ligand contact to Zn(2+). Position 456 (tyrosine 456) interacts with substrate. Histidine 497 lines the Zn(2+) pocket. Positions 577, 580, and 585 each coordinate [4Fe-4S] cluster. The disordered stretch occupies residues 659 to 686; that stretch reads IDSSGINDNKNDQQDASVVRVPSLEIEG.

Belongs to the ThiC family. As to quaternary structure, homodimer. The cofactor is [4Fe-4S] cluster.

It catalyses the reaction 5-amino-1-(5-phospho-beta-D-ribosyl)imidazole + S-adenosyl-L-methionine = 4-amino-2-methyl-5-(phosphooxymethyl)pyrimidine + CO + 5'-deoxyadenosine + formate + L-methionine + 3 H(+). It participates in cofactor biosynthesis; thiamine diphosphate biosynthesis. Catalyzes the synthesis of the hydroxymethylpyrimidine phosphate (HMP-P) moiety of thiamine from aminoimidazole ribotide (AIR) in a radical S-adenosyl-L-methionine (SAM)-dependent reaction. The protein is Phosphomethylpyrimidine synthase of Shewanella denitrificans (strain OS217 / ATCC BAA-1090 / DSM 15013).